Consider the following 1165-residue polypeptide: DNA-directed RNA polymerase subunit beta (1165 aa).

The protein belongs to the RNA polymerase beta chain family. In terms of assembly, the RNAP catalytic core consists of 2 alpha, 1 beta, 1 beta' and 1 omega subunit. When a sigma factor is associated with the core the holoenzyme is formed, which can initiate transcription.

It catalyses the reaction RNA(n) + a ribonucleoside 5'-triphosphate = RNA(n+1) + diphosphate. DNA-dependent RNA polymerase catalyzes the transcription of DNA into RNA using the four ribonucleoside triphosphates as substrates. This Leifsonia xyli subsp. xyli (strain CTCB07) protein is DNA-directed RNA polymerase subunit beta.